Here is an 896-residue protein sequence, read N- to C-terminus: Isoleucine--tRNA ligase (896 aa).

Residues 57-67 (PYANNNIHIGH) carry the 'HIGH' region motif. Glu-543 contributes to the L-isoleucyl-5'-AMP binding site. Residues 584–588 (KMSKS) carry the 'KMSKS' region motif. Residue Lys-587 participates in ATP binding. 4 residues coordinate Zn(2+): Cys-869, Cys-872, Cys-885, and Cys-888.

This sequence belongs to the class-I aminoacyl-tRNA synthetase family. IleS type 1 subfamily. As to quaternary structure, monomer. Requires Zn(2+) as cofactor.

The protein resides in the cytoplasm. The enzyme catalyses tRNA(Ile) + L-isoleucine + ATP = L-isoleucyl-tRNA(Ile) + AMP + diphosphate. In terms of biological role, catalyzes the attachment of isoleucine to tRNA(Ile). As IleRS can inadvertently accommodate and process structurally similar amino acids such as valine, to avoid such errors it has two additional distinct tRNA(Ile)-dependent editing activities. One activity is designated as 'pretransfer' editing and involves the hydrolysis of activated Val-AMP. The other activity is designated 'posttransfer' editing and involves deacylation of mischarged Val-tRNA(Ile). The protein is Isoleucine--tRNA ligase of Acholeplasma laidlawii (strain PG-8A).